Here is a 281-residue protein sequence, read N- to C-terminus: Bifunctional protein FolD (281 aa).

NADP(+)-binding positions include 165–167 (GRG), Thr-192, and Val-233.

This sequence belongs to the tetrahydrofolate dehydrogenase/cyclohydrolase family. As to quaternary structure, homodimer.

It catalyses the reaction (6R)-5,10-methylene-5,6,7,8-tetrahydrofolate + NADP(+) = (6R)-5,10-methenyltetrahydrofolate + NADPH. It carries out the reaction (6R)-5,10-methenyltetrahydrofolate + H2O = (6R)-10-formyltetrahydrofolate + H(+). Its pathway is one-carbon metabolism; tetrahydrofolate interconversion. Its function is as follows. Catalyzes the oxidation of 5,10-methylenetetrahydrofolate to 5,10-methenyltetrahydrofolate and then the hydrolysis of 5,10-methenyltetrahydrofolate to 10-formyltetrahydrofolate. The polypeptide is Bifunctional protein FolD (Mycobacterium marinum (strain ATCC BAA-535 / M)).